The sequence spans 912 residues: Eukaryotic translation initiation factor 3 subunit C (912 aa).

The disordered stretch occupies residues 1–44 (MSRFFTTGSDSESESSLSGEELVTKPVGGNYGKQPLLLSEDEED). Residues 8-21 (GSDSESESSLSGEE) are compositionally biased toward low complexity. Ser9, Ser11, Ser13, Ser15, Ser16, Ser18, and Ser39 each carry phosphoserine. Residue Lys99 is modified to N6-acetyllysine. Disordered regions lie at residues 157–305 (TNYK…RVRG) and 521–541 (QLTPPEGSSKSEQDQAENEGE). Residues Ser166, Ser178, Ser181, and Ser182 each carry the phosphoserine modification. A compositionally biased stretch (acidic residues) spans 166–190 (SADEDAEKNEEDSEGSSDEDEDDDG). The span at 199–215 (KKSEAPSGDSRKFLKKE) shows a compositional bias: basic and acidic residues. A compositionally biased stretch (acidic residues) spans 216-229 (DEDEDSEESEDSEA). Residues 260-277 (PTTEEDKKAAEKKREDKA) show a composition bias toward basic and acidic residues. Residues 521–530 (QLTPPEGSSK) show a composition bias toward polar residues. Thr523 bears the Phosphothreonine mark. Lys642 carries the post-translational modification N6-acetyllysine. Positions 672-848 (FHLHINLELL…QTVVMHRTEP (177 aa)) constitute a PCI domain. The disordered stretch occupies residues 884–912 (FRDQKDGYRKNEGYMRRGGYRQQQSQTAY). A compositionally biased stretch (basic and acidic residues) spans 885-898 (RDQKDGYRKNEGYM). Ser908 carries the phosphoserine modification.

The protein belongs to the eIF-3 subunit C family. In terms of assembly, component of the eukaryotic translation initiation factor 3 (eIF-3) complex, which is composed of 13 subunits: EIF3A, EIF3B, EIF3C, EIF3D, EIF3E, EIF3F, EIF3G, EIF3H, EIF3I, EIF3J, EIF3K, EIF3L and EIF3M. The eIF-3 complex appears to include 3 stable modules: module A is composed of EIF3A, EIF3B, EIF3G and EIF3I; module B is composed of EIF3F, EIF3H, and EIF3M; and module C is composed of EIF3C, EIF3D, EIF3E, EIF3K and EIF3L. EIF3C of module C binds EIF3B of module A and EIF3H of module B, thereby linking the three modules. EIF3J is a labile subunit that binds to the eIF-3 complex via EIF3B. The eIF-3 complex interacts with RPS6KB1 under conditions of nutrient depletion. Mitogenic stimulation leads to binding and activation of a complex composed of MTOR and RPTOR, leading to phosphorylation and release of RPS6KB1 and binding of EIF4B to eIF-3. Identified in a HCV IRES-mediated translation complex, at least composed of EIF3C, IGF2BP1, RPS3 and HCV RNA-replicon. Interacts with ALKBH4, IFIT1 and IFIT2. Interacts with BZW2/5MP1. Phosphorylated. Phosphorylation is enhanced upon serum stimulation.

The protein resides in the cytoplasm. Component of the eukaryotic translation initiation factor 3 (eIF-3) complex, which is required for several steps in the initiation of protein synthesis. The eIF-3 complex associates with the 40S ribosome and facilitates the recruitment of eIF-1, eIF-1A, eIF-2:GTP:methionyl-tRNAi and eIF-5 to form the 43S pre-initiation complex (43S PIC). The eIF-3 complex stimulates mRNA recruitment to the 43S PIC and scanning of the mRNA for AUG recognition. The eIF-3 complex is also required for disassembly and recycling of post-termination ribosomal complexes and subsequently prevents premature joining of the 40S and 60S ribosomal subunits prior to initiation. The eIF-3 complex specifically targets and initiates translation of a subset of mRNAs involved in cell proliferation, including cell cycling, differentiation and apoptosis, and uses different modes of RNA stem-loop binding to exert either translational activation or repression. In Bos taurus (Bovine), this protein is Eukaryotic translation initiation factor 3 subunit C.